The chain runs to 1159 residues: RNA-directed RNA polymerase (1159 aa).

In terms of domain architecture, RdRp catalytic spans 545-727 (LTYGVLAEDT…KALASYTGLE (183 aa)).

It belongs to the reoviridae RNA-directed RNA polymerase family. As to quaternary structure, interacts with VP3 (Potential). Interacts with VP2 (Potential). Interacts with NSP5; this interaction is probably necessary for the formation of functional virus factories.

Its subcellular location is the virion. The enzyme catalyses RNA(n) + a ribonucleoside 5'-triphosphate = RNA(n+1) + diphosphate. RNA-directed RNA polymerase that is involved in both transcription and genome replication. Together with VP3 capping enzyme, forms an enzyme complex positioned near the channels situated at each of the five-fold vertices of the core. Following infection, the outermost layer of the virus is lost, leaving a double-layered particle (DLP) made up of the core and VP6 shell. VP1 then catalyzes the transcription of fully conservative plus-strand genomic RNAs that are extruded through the DLP's channels into the cytoplasm where they function as mRNAs for translation of viral proteins. One copy of each of the viral (+)RNAs is also recruited during core assembly, together with newly synthesized polymerase complexes and VP2. The polymerase of these novo-formed particles catalyzes the synthesis of complementary minus-strands leading to dsDNA formation. To do so, the polymerase specifically recognizes conserved 3' sequence(s) in plus-strand RNA templates. Once dsRNA synthesis is complete, the polymerase switches to the transcriptional mode, thus providing secondary transcription. The protein is RNA-directed RNA polymerase of Homo sapiens (Human).